The primary structure comprises 243 residues: Small ribosomal subunit protein uS3 (243 aa).

Residues Ile39–Glu110 form the KH type-2 domain. Residues Gln217–Gly243 form a disordered region. Residues Gln234–Gly243 are compositionally biased toward basic and acidic residues.

Belongs to the universal ribosomal protein uS3 family. Part of the 30S ribosomal subunit. Forms a tight complex with proteins S10 and S14.

Its function is as follows. Binds the lower part of the 30S subunit head. Binds mRNA in the 70S ribosome, positioning it for translation. The polypeptide is Small ribosomal subunit protein uS3 (Synechococcus sp. (strain WH7803)).